A 264-amino-acid chain; its full sequence is S-adenosylmethionine decarboxylase proenzyme (264 aa).

The active-site Schiff-base intermediate with substrate; via pyruvic acid is S113. A Pyruvic acid (Ser); by autocatalysis modification is found at S113. The Proton acceptor; for processing activity role is filled by H118. The active-site Proton donor; for catalytic activity is C141.

This sequence belongs to the prokaryotic AdoMetDC family. Type 2 subfamily. In terms of assembly, heterooctamer of four alpha and four beta chains arranged as a tetramer of alpha/beta heterodimers. It depends on pyruvate as a cofactor. Post-translationally, is synthesized initially as an inactive proenzyme. Formation of the active enzyme involves a self-maturation process in which the active site pyruvoyl group is generated from an internal serine residue via an autocatalytic post-translational modification. Two non-identical subunits are generated from the proenzyme in this reaction, and the pyruvate is formed at the N-terminus of the alpha chain, which is derived from the carboxyl end of the proenzyme. The post-translation cleavage follows an unusual pathway, termed non-hydrolytic serinolysis, in which the side chain hydroxyl group of the serine supplies its oxygen atom to form the C-terminus of the beta chain, while the remainder of the serine residue undergoes an oxidative deamination to produce ammonia and the pyruvoyl group blocking the N-terminus of the alpha chain.

It catalyses the reaction S-adenosyl-L-methionine + H(+) = S-adenosyl 3-(methylsulfanyl)propylamine + CO2. The protein operates within amine and polyamine biosynthesis; S-adenosylmethioninamine biosynthesis; S-adenosylmethioninamine from S-adenosyl-L-methionine: step 1/1. In terms of biological role, catalyzes the decarboxylation of S-adenosylmethionine to S-adenosylmethioninamine (dcAdoMet), the propylamine donor required for the synthesis of the polyamines spermine and spermidine from the diamine putrescine. The protein is S-adenosylmethionine decarboxylase proenzyme of Azotobacter vinelandii (strain DJ / ATCC BAA-1303).